The sequence spans 432 residues: E3 ubiquitin-protein ligase ATL42 (432 aa).

Positions Met-1–Ala-18 are cleaved as a signal peptide. Residues Leu-37 to Tyr-57 form a helical membrane-spanning segment. The RING-type; atypical zinc finger occupies Cys-123–Arg-165.

It belongs to the RING-type zinc finger family. ATL subfamily.

It is found in the membrane. It carries out the reaction S-ubiquitinyl-[E2 ubiquitin-conjugating enzyme]-L-cysteine + [acceptor protein]-L-lysine = [E2 ubiquitin-conjugating enzyme]-L-cysteine + N(6)-ubiquitinyl-[acceptor protein]-L-lysine.. Its pathway is protein modification; protein ubiquitination. E3 ubiquitin-protein ligase able to catalyze polyubiquitination with ubiquitin-conjugating enzyme E2 UBC8 in vitro. This is E3 ubiquitin-protein ligase ATL42 (ATL42) from Arabidopsis thaliana (Mouse-ear cress).